The chain runs to 464 residues: Argininosuccinate lyase (464 aa).

It belongs to the lyase 1 family. Argininosuccinate lyase subfamily.

The protein resides in the cytoplasm. It catalyses the reaction 2-(N(omega)-L-arginino)succinate = fumarate + L-arginine. It participates in amino-acid biosynthesis; L-arginine biosynthesis; L-arginine from L-ornithine and carbamoyl phosphate: step 3/3. This chain is Argininosuccinate lyase, found in Pseudomonas aeruginosa (strain LESB58).